The following is a 459-amino-acid chain: Elongation factor 1-alpha 4 (459 aa).

Positions K5 to T242 constitute a tr-type G domain. The segment at G14–S21 is G1. The tract at residues G70 to D74 is G2. The tract at residues D91–G94 is G3. A G4 region spans residues N153–D156. The tract at residues S194 to F196 is G5. A 5-glutamyl glycerylphosphorylethanolamine mark is found at E301 and E374.

It belongs to the TRAFAC class translation factor GTPase superfamily. Classic translation factor GTPase family. EF-Tu/EF-1A subfamily.

The protein localises to the cytoplasm. In terms of biological role, this protein promotes the GTP-dependent binding of aminoacyl-tRNA to the A-site of ribosomes during protein biosynthesis. This is Elongation factor 1-alpha 4 (eft-4) from Oscheius tipulae.